The following is a 311-amino-acid chain: Cytosolic Fe-S cluster assembly factor Nubp1 homolog (311 aa).

Residues Cys9, Cys23, Cys26, and Cys32 each coordinate [4Fe-4S] cluster. Residue 63-70 participates in ATP binding; sequence GKGGVGKS. Residues Cys240 and Cys243 each coordinate [4Fe-4S] cluster.

It belongs to the Mrp/NBP35 ATP-binding proteins family. NUBP1/NBP35 subfamily. As to quaternary structure, heterotetramer of 2 Nubp1 and 2 Nubp2 chains. The cofactor is [4Fe-4S] cluster.

It is found in the cytoplasm. Its function is as follows. Component of the cytosolic iron-sulfur (Fe/S) protein assembly (CIA) machinery. Required for maturation of extramitochondrial Fe-S proteins. The Nubp1-Nubp2 heterotetramer forms a Fe-S scaffold complex, mediating the de novo assembly of an Fe-S cluster and its transfer to target apoproteins. The polypeptide is Cytosolic Fe-S cluster assembly factor Nubp1 homolog (Drosophila yakuba (Fruit fly)).